The primary structure comprises 275 residues: 4-diphosphocytidyl-2-C-methyl-D-erythritol kinase (275 aa).

The active site involves Lys9. 90 to 100 contributes to the ATP binding site; it reads PVGGGLGGGSS. Residue Asp132 is part of the active site.

It belongs to the GHMP kinase family. IspE subfamily.

It catalyses the reaction 4-CDP-2-C-methyl-D-erythritol + ATP = 4-CDP-2-C-methyl-D-erythritol 2-phosphate + ADP + H(+). Its pathway is isoprenoid biosynthesis; isopentenyl diphosphate biosynthesis via DXP pathway; isopentenyl diphosphate from 1-deoxy-D-xylulose 5-phosphate: step 3/6. Functionally, catalyzes the phosphorylation of the position 2 hydroxy group of 4-diphosphocytidyl-2C-methyl-D-erythritol. In Sulfurihydrogenibium sp. (strain YO3AOP1), this protein is 4-diphosphocytidyl-2-C-methyl-D-erythritol kinase.